A 103-amino-acid chain; its full sequence is Large ribosomal subunit protein uL24 (103 aa).

This sequence belongs to the universal ribosomal protein uL24 family. As to quaternary structure, part of the 50S ribosomal subunit.

Its function is as follows. One of two assembly initiator proteins, it binds directly to the 5'-end of the 23S rRNA, where it nucleates assembly of the 50S subunit. One of the proteins that surrounds the polypeptide exit tunnel on the outside of the subunit. This Latilactobacillus sakei subsp. sakei (strain 23K) (Lactobacillus sakei subsp. sakei) protein is Large ribosomal subunit protein uL24.